The primary structure comprises 361 residues: Probable dual-specificity RNA methyltransferase RlmN (361 aa).

The active-site Proton acceptor is Glu91. One can recognise a Radical SAM core domain in the interval 97–329 (QHYGLSVCVT…KKKGVNCVVR (233 aa)). Cys104 and Cys340 are disulfide-bonded. 3 residues coordinate [4Fe-4S] cluster: Cys111, Cys115, and Cys118. S-adenosyl-L-methionine-binding positions include 163–164 (GE), Ser195, 218–220 (SLH), and Asn296. Cys340 functions as the S-methylcysteine intermediate in the catalytic mechanism.

It belongs to the radical SAM superfamily. RlmN family. [4Fe-4S] cluster is required as a cofactor.

It localises to the cytoplasm. The enzyme catalyses adenosine(2503) in 23S rRNA + 2 reduced [2Fe-2S]-[ferredoxin] + 2 S-adenosyl-L-methionine = 2-methyladenosine(2503) in 23S rRNA + 5'-deoxyadenosine + L-methionine + 2 oxidized [2Fe-2S]-[ferredoxin] + S-adenosyl-L-homocysteine. The catalysed reaction is adenosine(37) in tRNA + 2 reduced [2Fe-2S]-[ferredoxin] + 2 S-adenosyl-L-methionine = 2-methyladenosine(37) in tRNA + 5'-deoxyadenosine + L-methionine + 2 oxidized [2Fe-2S]-[ferredoxin] + S-adenosyl-L-homocysteine. Specifically methylates position 2 of adenine 2503 in 23S rRNA and position 2 of adenine 37 in tRNAs. The protein is Probable dual-specificity RNA methyltransferase RlmN of Streptococcus pneumoniae serotype 4 (strain ATCC BAA-334 / TIGR4).